The primary structure comprises 303 residues: L(+)-tartrate dehydratase subunit alpha (303 aa).

Iron-sulfur cluster is bound by residues Cys-71, Cys-190, and Cys-277.

This sequence belongs to the class-I fumarase family. In terms of assembly, tetramer of two alpha and two beta subunits. Requires iron-sulfur cluster as cofactor.

The enzyme catalyses (2R,3R)-tartrate = oxaloacetate + H2O. In Escherichia coli O157:H7, this protein is L(+)-tartrate dehydratase subunit alpha (ttdA).